We begin with the raw amino-acid sequence, 373 residues long: Cystathionine gamma-synthase/O-acetylhomoserine (thiol)-lyase (373 aa).

Lys197 is modified (N6-(pyridoxal phosphate)lysine).

The protein belongs to the trans-sulfuration enzymes family. Homotetramer. It depends on pyridoxal 5'-phosphate as a cofactor.

It is found in the cytoplasm. The enzyme catalyses O-acetyl-L-homoserine + L-cysteine = L,L-cystathionine + acetate + H(+). It catalyses the reaction O-acetyl-L-homoserine + hydrogen sulfide = L-homocysteine + acetate. The protein operates within amino-acid biosynthesis; L-methionine biosynthesis via de novo pathway. Its function is as follows. Catalyzes the formation of L-cystathionine from O-acetyl-L-homoserine and L-cysteine. Cannot use O-succinyl-L-homoserine as substrate. Also exhibits O-acetylhomoserine thiolyase activity, catalyzing the synthesis of L-homocysteine from O-acetyl-L-homoserine and sulfide. The polypeptide is Cystathionine gamma-synthase/O-acetylhomoserine (thiol)-lyase (metI) (Bacillus subtilis (strain 168)).